A 601-amino-acid chain; its full sequence is Protein CT_858 (601 aa).

Belongs to the chlamydial CPn_1016/CT_858/TC_0248 family.

This Chlamydia trachomatis serovar D (strain ATCC VR-885 / DSM 19411 / UW-3/Cx) protein is Protein CT_858.